Here is a 1000-residue protein sequence, read N- to C-terminus: Exportin-T (1000 aa).

This sequence belongs to the exportin family.

It localises to the nucleus. It is found in the cytoplasm. Its function is as follows. tRNA nucleus export receptor which facilitates tRNA translocation across the nuclear pore complex. Involved in pre-tRNA splicing, probably by affecting the interaction of pre-tRNA with splicing endonuclease. In Debaryomyces hansenii (strain ATCC 36239 / CBS 767 / BCRC 21394 / JCM 1990 / NBRC 0083 / IGC 2968) (Yeast), this protein is Exportin-T (LOS1).